We begin with the raw amino-acid sequence, 538 residues long: Putative cysteine ligase BshC (538 aa).

Residues 248 to 268 (ISKYKEVQEGLRNQQEVIKEL) are a coiled coil.

It belongs to the BshC family.

In terms of biological role, involved in bacillithiol (BSH) biosynthesis. May catalyze the last step of the pathway, the addition of cysteine to glucosamine malate (GlcN-Mal) to generate BSH. In Bacillus cereus (strain B4264), this protein is Putative cysteine ligase BshC.